A 53-amino-acid chain; its full sequence is Photosystem II reaction center protein K (53 aa).

A propeptide spanning residues Met1–Ala16 is cleaved from the precursor. The chain crosses the membrane as a helical span at residues Leu28–Ala48.

Belongs to the PsbK family. As to quaternary structure, PSII is composed of 1 copy each of membrane proteins PsbA, PsbB, PsbC, PsbD, PsbE, PsbF, PsbH, PsbI, PsbJ, PsbK, PsbL, PsbM, PsbT, PsbY, PsbZ, Psb30/Ycf12, at least 3 peripheral proteins of the oxygen-evolving complex and a large number of cofactors. It forms dimeric complexes.

The protein resides in the plastid. It is found in the chloroplast thylakoid membrane. In terms of biological role, one of the components of the core complex of photosystem II (PSII). PSII is a light-driven water:plastoquinone oxidoreductase that uses light energy to abstract electrons from H(2)O, generating O(2) and a proton gradient subsequently used for ATP formation. It consists of a core antenna complex that captures photons, and an electron transfer chain that converts photonic excitation into a charge separation. The protein is Photosystem II reaction center protein K of Euglena anabaena (Euglenaria anabaena).